Reading from the N-terminus, the 282-residue chain is MKVISSIQELRDQLRGQNRAAFVPTMGNLHEGHLSLMRLARQHGDPVVASIFVNRLQFGPNEDFDKYPRTLQEDIEKLQSEGVYVLFAPSERDMYPEPQEYRVEPPHDLGDILEGEFRPGFFKGVCTVVMKLFSCAQPRVAVFGKKDYQQLMIVRRMVQQFALPIDIVPAETVRAEDGLALSSRNRYLSPDERAEAPVLYRTLHDVRDTVLGGDRASADLLAVEARARAALEQRGWKPDYVAIRKRVDLQAPTREEFLAGEPLVILTAAKLGATRLIDNLEI.

26 to 33 contributes to the ATP binding site; it reads MGNLHEGH. His-33 acts as the Proton donor in catalysis. Gln-57 contacts (R)-pantoate. Gln-57 serves as a coordination point for beta-alanine. Position 144 to 147 (144 to 147) interacts with ATP; it reads GKKD. Residue Gln-150 participates in (R)-pantoate binding. ATP is bound by residues Val-173 and 181–184; that span reads LSSR.

It belongs to the pantothenate synthetase family. Homodimer.

It is found in the cytoplasm. It carries out the reaction (R)-pantoate + beta-alanine + ATP = (R)-pantothenate + AMP + diphosphate + H(+). It participates in cofactor biosynthesis; (R)-pantothenate biosynthesis; (R)-pantothenate from (R)-pantoate and beta-alanine: step 1/1. Functionally, catalyzes the condensation of pantoate with beta-alanine in an ATP-dependent reaction via a pantoyl-adenylate intermediate. The polypeptide is Pantothenate synthetase (Cupriavidus taiwanensis (strain DSM 17343 / BCRC 17206 / CCUG 44338 / CIP 107171 / LMG 19424 / R1) (Ralstonia taiwanensis (strain LMG 19424))).